Here is a 226-residue protein sequence, read N- to C-terminus: Urease accessory protein UreF (226 aa).

This sequence belongs to the UreF family. In terms of assembly, ureD, UreF and UreG form a complex that acts as a GTP-hydrolysis-dependent molecular chaperone, activating the urease apoprotein by helping to assemble the nickel containing metallocenter of UreC. The UreE protein probably delivers the nickel.

It localises to the cytoplasm. Required for maturation of urease via the functional incorporation of the urease nickel metallocenter. The chain is Urease accessory protein UreF from Burkholderia vietnamiensis (strain G4 / LMG 22486) (Burkholderia cepacia (strain R1808)).